Consider the following 59-residue polypeptide: MNLQFLFIFIAFCVMLFAQIVTAKPVEAEVAQPKLYQRGEGGNGMEPIPEDVLNEALNA.

A signal peptide spans 1–23; sequence MNLQFLFIFIAFCVMLFAQIVTA.

Interacts with human F2 (thrombin). In terms of tissue distribution, salivary gland (at protein level).

It is found in the secreted. Its function is as follows. Anticoagulant protein that acts as a competitive inhibitor of host thrombin. Inhibits thrombin-mediated host platelet aggregation. The polypeptide is Salivary thrombin inhibitor XC-43 (Xenopsylla cheopis (Oriental rat flea)).